The sequence spans 110 residues: Large ribosomal subunit protein uL22 (110 aa).

Belongs to the universal ribosomal protein uL22 family. As to quaternary structure, part of the 50S ribosomal subunit.

This protein binds specifically to 23S rRNA; its binding is stimulated by other ribosomal proteins, e.g. L4, L17, and L20. It is important during the early stages of 50S assembly. It makes multiple contacts with different domains of the 23S rRNA in the assembled 50S subunit and ribosome. Its function is as follows. The globular domain of the protein is located near the polypeptide exit tunnel on the outside of the subunit, while an extended beta-hairpin is found that lines the wall of the exit tunnel in the center of the 70S ribosome. This chain is Large ribosomal subunit protein uL22, found in Delftia acidovorans (strain DSM 14801 / SPH-1).